Consider the following 341-residue polypeptide: Adenine deaminase (341 aa).

The Zn(2+) site is built by His-17, His-19, and His-197. The active-site Proton donor is Glu-200. Residue Asp-278 participates in Zn(2+) binding. Asp-279 lines the substrate pocket.

This sequence belongs to the metallo-dependent hydrolases superfamily. Adenosine and AMP deaminases family. Adenine deaminase type 2 subfamily. Zn(2+) serves as cofactor.

It carries out the reaction adenine + H2O + H(+) = hypoxanthine + NH4(+). Functionally, catalyzes the hydrolytic deamination of adenine to hypoxanthine. Plays an important role in the purine salvage pathway and in nitrogen catabolism. This Chlorobium luteolum (strain DSM 273 / BCRC 81028 / 2530) (Pelodictyon luteolum) protein is Adenine deaminase.